A 203-amino-acid polypeptide reads, in one-letter code: Probable cytochrome c oxidase subunit 3 (203 aa).

5 consecutive transmembrane segments (helical) span residues 30–50 (IVWL…YFTA), 70–90 (AVPV…GVFA), 102–122 (WYVI…YEYY), 142–162 (LATG…IFLL), and 179–199 (IVVS…FTVI).

This sequence belongs to the cytochrome c oxidase subunit 3 family.

It is found in the cell membrane. The enzyme catalyses 4 Fe(II)-[cytochrome c] + O2 + 8 H(+)(in) = 4 Fe(III)-[cytochrome c] + 2 H2O + 4 H(+)(out). The polypeptide is Probable cytochrome c oxidase subunit 3 (ctaE) (Mycolicibacterium paratuberculosis (strain ATCC BAA-968 / K-10) (Mycobacterium paratuberculosis)).